The following is a 259-amino-acid chain: Deoxyribose-phosphate aldolase (259 aa).

Asp102 (proton donor/acceptor) is an active-site residue. Residue Lys167 is the Schiff-base intermediate with acetaldehyde of the active site. The active-site Proton donor/acceptor is Lys201.

Belongs to the DeoC/FbaB aldolase family. DeoC type 2 subfamily.

The protein resides in the cytoplasm. The catalysed reaction is 2-deoxy-D-ribose 5-phosphate = D-glyceraldehyde 3-phosphate + acetaldehyde. It functions in the pathway carbohydrate degradation; 2-deoxy-D-ribose 1-phosphate degradation; D-glyceraldehyde 3-phosphate and acetaldehyde from 2-deoxy-alpha-D-ribose 1-phosphate: step 2/2. In terms of biological role, catalyzes a reversible aldol reaction between acetaldehyde and D-glyceraldehyde 3-phosphate to generate 2-deoxy-D-ribose 5-phosphate. The polypeptide is Deoxyribose-phosphate aldolase (Salmonella typhi).